The following is a 630-amino-acid chain: MSRKLDSPIKTQMAVALVKSPLNGEFREFNKVGMKTPVGRRRVFVQTETGCVLGLELDRSDNAHTVKRKLQVALNFPIEESSLTFGDLVLKNDLTAVRSDSPLLLTRNNFHRSSSTPCLSPMRADLQQRRDESSPIEILGNSVSFSFVRQMAKDITKAVKKGIDPVAVNSGLGGAYYFKNSRGESVAIVKPTDEEPYAPNNPKGFVGKALGQPGLKRSVRVGETGYREVAAYLLDKEHFANVPPTALVKITHSIFNVNDGVKASKPMEKMLVSKIASLQQFIPHDYDASEHGTSNFPVSAVHRIGILDIRILNTDRHSGNLLVKKLDGDGMFGQVELVPIDHGLCLPETLEDPYFEWIHWPQASIPFSEDELKYIANLDPLGDCEMLRRELPMVREASLRVLVLCTIFLKEAAANGLCLAEIGEMMTREVRPGDEEPSEIEVVCLEAMSLIGEKDAESPRSDLGNDIEFQFDIDCEEVTDCTKKLALPLGLTFGNARGQLSKVEETTEDGEEEEEEDREEEENDRADLEKMPTIKLSMSLKSTLLGEKSQKYQKHPGARVESAYASSAHRSADEQIPSSTSFVKLSDMSEEEWTIFLEKYQELLYPAIEKRKSITLGQKQRQRLGTSCQF.

The region spanning 41-98 (RRVFVQTETGCVLGLELDRSDNAHTVKRKLQVALNFPIEESSLTFGDLVLKNDLTAVR) is the Ubiquitin-like; degenerate domain. The PI3K/PI4K catalytic domain maps to 162–459 (GIDPVAVNSG…LIGEKDAESP (298 aa)). The interval 168–174 (VNSGLGG) is G-loop. ATP-binding positions include 169-175 (NSGLGGA), Lys190, and 279-282 (QQFI). The segment at 312 to 320 (LNTDRHSGN) is catalytic loop. Residues 339-365 (PIDHGLCLPETLEDPYFEWIHWPQASI) form an activation loop region. Asp341 is an ATP binding site. Positions 500–527 (LSKVEETTEDGEEEEEEDREEEENDRAD) are disordered. The span at 506–524 (TTEDGEEEEEEDREEEEND) shows a compositional bias: acidic residues. Ser571 carries the post-translational modification Phosphoserine.

This sequence belongs to the PI3/PI4-kinase family. Type II PI4K subfamily. Interacts with AHK2.

The catalysed reaction is a 1,2-diacyl-sn-glycero-3-phospho-(1D-myo-inositol) + ATP = a 1,2-diacyl-sn-glycero-3-phospho-(1D-myo-inositol 4-phosphate) + ADP + H(+). Its function is as follows. The phosphorylation of phosphatidylinositol (PI) to PI4P is the first committed step in the generation of phosphatidylinositol 4,5-bisphosphate (PIP2), a precursor of the second messenger inositol 1,4,5-trisphosphate (InsP3). This is Phosphatidylinositol 4-kinase gamma 5 (PI4KG5) from Arabidopsis thaliana (Mouse-ear cress).